Here is a 236-residue protein sequence, read N- to C-terminus: tRNA1(Val) (adenine(37)-N6)-methyltransferase (236 aa).

This sequence belongs to the methyltransferase superfamily. tRNA (adenine-N(6)-)-methyltransferase family.

The protein localises to the cytoplasm. It catalyses the reaction adenosine(37) in tRNA1(Val) + S-adenosyl-L-methionine = N(6)-methyladenosine(37) in tRNA1(Val) + S-adenosyl-L-homocysteine + H(+). Functionally, specifically methylates the adenine in position 37 of tRNA(1)(Val) (anticodon cmo5UAC). This Shewanella sp. (strain MR-7) protein is tRNA1(Val) (adenine(37)-N6)-methyltransferase.